The primary structure comprises 144 residues: Putative 2'-deoxynucleoside 5'-phosphate N-hydrolase 1 (144 aa).

Substrate-binding positions include 7–13 (YFCGSIR), Y22, H39, E83, and 107–109 (SGM).

The protein belongs to the 2'-deoxynucleoside 5'-phosphate N-hydrolase 1 family. In terms of assembly, monomer and homodimer.

It is found in the cytoplasm. Its subcellular location is the nucleus. It carries out the reaction a pyrimidine 2'-deoxyribonucleoside 5'-phosphate + H2O = a pyrimidine nucleobase + 2-deoxy-D-ribose 5-phosphate. It catalyses the reaction a purine 2'-deoxyribonucleoside 5'-phosphate + H2O = a purine nucleobase + 2-deoxy-D-ribose 5-phosphate. In terms of biological role, catalyzes the cleavage of the N-glycosidic bond of deoxyribonucleoside 5'-monophosphates to yield deoxyribose 5-phosphate and a purine or pyrimidine base. The chain is Putative 2'-deoxynucleoside 5'-phosphate N-hydrolase 1 from Trichoplax adhaerens (Trichoplax reptans).